The following is a 95-amino-acid chain: Small ribosomal subunit protein bS6 (95 aa).

This sequence belongs to the bacterial ribosomal protein bS6 family.

Functionally, binds together with bS18 to 16S ribosomal RNA. The chain is Small ribosomal subunit protein bS6 from Exiguobacterium sibiricum (strain DSM 17290 / CCUG 55495 / CIP 109462 / JCM 13490 / 255-15).